Reading from the N-terminus, the 547-residue chain is Fimbria adhesin EcpD (547 aa).

Residues 1–20 (MRVNLLIAMIIFALIWPATA) form the signal peptide.

It belongs to the EcpD/MatE family. As to quaternary structure, forms polymers. Interacts with EcpA.

It is found in the fimbrium. Functionally, part of the ecpRABCDE operon, which encodes the E.coli common pilus (ECP). ECP is found in both commensal and pathogenic strains and plays a dual role in early-stage biofilm development and host cell recognition. Tip pilus adhesin, which is required for assembly of EcpA into fibers. In Escherichia coli O18:K1:H7 (strain IHE3034 / ExPEC), this protein is Fimbria adhesin EcpD (ecpD).